Reading from the N-terminus, the 151-residue chain is 3-dehydroquinate dehydratase (151 aa).

The active-site Proton acceptor is Y24. The substrate site is built by N76, H82, and D89. H102 functions as the Proton donor in the catalytic mechanism. Substrate contacts are provided by residues 103 to 104 (VS) and R113.

The protein belongs to the type-II 3-dehydroquinase family. Homododecamer.

It carries out the reaction 3-dehydroquinate = 3-dehydroshikimate + H2O. The protein operates within metabolic intermediate biosynthesis; chorismate biosynthesis; chorismate from D-erythrose 4-phosphate and phosphoenolpyruvate: step 3/7. Catalyzes a trans-dehydration via an enolate intermediate. This chain is 3-dehydroquinate dehydratase, found in Rhodopseudomonas palustris (strain TIE-1).